Here is a 214-residue protein sequence, read N- to C-terminus: 3,4-dihydroxy-2-butanone 4-phosphate synthase (214 aa).

Residues 37-38, Asp42, 150-154, and Glu174 each bind D-ribulose 5-phosphate; these read RE and RRGHT. Position 38 (Glu38) interacts with Mg(2+). A Mg(2+)-binding site is contributed by His153.

Belongs to the DHBP synthase family. As to quaternary structure, homodimer. Mg(2+) serves as cofactor. Requires Mn(2+) as cofactor.

The enzyme catalyses D-ribulose 5-phosphate = (2S)-2-hydroxy-3-oxobutyl phosphate + formate + H(+). The protein operates within cofactor biosynthesis; riboflavin biosynthesis; 2-hydroxy-3-oxobutyl phosphate from D-ribulose 5-phosphate: step 1/1. Functionally, catalyzes the conversion of D-ribulose 5-phosphate to formate and 3,4-dihydroxy-2-butanone 4-phosphate. This is 3,4-dihydroxy-2-butanone 4-phosphate synthase from Nitratidesulfovibrio vulgaris (strain DP4) (Desulfovibrio vulgaris).